The sequence spans 443 residues: Xaa-Pro dipeptidase (443 aa).

Mn(2+) contacts are provided by D241, D252, H333, E378, and E417.

It belongs to the peptidase M24B family. Bacterial-type prolidase subfamily. Mn(2+) serves as cofactor.

It carries out the reaction Xaa-L-Pro dipeptide + H2O = an L-alpha-amino acid + L-proline. In terms of biological role, splits dipeptides with a prolyl residue in the C-terminal position. The sequence is that of Xaa-Pro dipeptidase from Actinobacillus pleuropneumoniae serotype 5b (strain L20).